The following is a 782-amino-acid chain: E3 UFM1-protein ligase 1 homolog (782 aa).

Residues asparagine 404–lysine 478 are disordered.

It belongs to the UFL1 family.

Functionally, E3 UFM1-protein ligase that mediates ufmylation of target proteins. This is E3 UFM1-protein ligase 1 homolog from Drosophila melanogaster (Fruit fly).